The primary structure comprises 278 residues: MSQKLPPLKIYTSQLPLVSHKNMLENEEEASHSQLFTPCPVPPSFPKASKPNSNQPYPNGPVCIYPPNIYLYAKPTMPIIQSFDVVINVAKEVLHPFRTDGRHYRDSKHNLDIQVFDHIEYVHIHWDHDTQFALELDKLVSFVAYNAMQLNKKVLINCQMGISRSACLMIAFIMKTLNLNVSDAYEYVKERSPWIGPNMSLIFQLSEYQQIIRKNSSQGPYQSSSLKQSKRKSEGNLLFPEKPHSAQLPLVSPSTSESSMFTNLRRTRSSGSISNDAS.

The Tyrosine-protein phosphatase domain maps to 60-214; sequence GPVCIYPPNI…LSEYQQIIRK (155 aa). Residue cysteine 158 is the Phosphocysteine intermediate of the active site. Residues 217–278 form a disordered region; sequence SQGPYQSSSL…SSGSISNDAS (62 aa). Positions 252–278 are enriched in polar residues; that stretch reads SPSTSESSMFTNLRRTRSSGSISNDAS.

Belongs to the protein-tyrosine phosphatase family. Non-receptor class dual specificity subfamily.

The catalysed reaction is O-phospho-L-tyrosyl-[protein] + H2O = L-tyrosyl-[protein] + phosphate. Its function is as follows. Dual specificity phosphatase that dephosphorylates MAP kinase pmk1 on a Tyr. Has a role in chloride ion homeostasis by inactivating this pmk1 MAP kinase pathway. This chain is Tyrosine-protein phosphatase pmp1 (pmp1), found in Schizosaccharomyces pombe (strain 972 / ATCC 24843) (Fission yeast).